The primary structure comprises 294 residues: MLERLSGHTRLTALLAAPARHSLSPKMHNAAYAKLGLDYAYLAFEVDNSGLAAAVQGMRALGICGANVSMPNKQAIVPLLDELSPAAALAGAVNTVVNTDGKGHLVGHITDGTGAIRSLAEEGVAIKDQIITIAGAGGAGTAIAVQLGLDGAKEIRLFNRKTATFKQAKQVLKGINAKTSALASLQDLADDRAFRRSIAESSIYIDATGVGMKPLEEHSLITDPALIRPDLVVFDLVYHPAETKLLAFAREHGAKKVMNGLGMLLYQGAEAFKLMTGEDMPVAYIRELLCRNKE.

Residues 22 to 24 (SLS) and S69 each bind shikimate. The Proton acceptor role is filled by K73. Shikimate contacts are provided by N94 and D111. NADP(+) is bound by residues 135–139 (GAGGA) and L236. Y238 lines the shikimate pocket. G260 is an NADP(+) binding site.

The protein belongs to the shikimate dehydrogenase family. In terms of assembly, homodimer.

The enzyme catalyses shikimate + NADP(+) = 3-dehydroshikimate + NADPH + H(+). It functions in the pathway metabolic intermediate biosynthesis; chorismate biosynthesis; chorismate from D-erythrose 4-phosphate and phosphoenolpyruvate: step 4/7. In terms of biological role, involved in the biosynthesis of the chorismate, which leads to the biosynthesis of aromatic amino acids. Catalyzes the reversible NADPH linked reduction of 3-dehydroshikimate (DHSA) to yield shikimate (SA). This is Shikimate dehydrogenase (NADP(+)) from Streptococcus equi subsp. zooepidemicus (strain MGCS10565).